The sequence spans 146 residues: Large ribosomal subunit protein bL9 (146 aa).

It belongs to the bacterial ribosomal protein bL9 family.

Functionally, binds to the 23S rRNA. This Symbiobacterium thermophilum (strain DSM 24528 / JCM 14929 / IAM 14863 / T) protein is Large ribosomal subunit protein bL9.